The primary structure comprises 361 residues: MNHIKLIDCPIDVTYAINLISDPSCGASSIFIGTTRDSFQGKKVVSLAYEAYENMALKEMDKICSDLRATWPDLKHILIYHRLGTVPENEASVVIAASAPHRSAALKAVTFAIDQLKSRVPIWKKELYEGNHDAEWKENSESIRPKKSLSSFNYSVCKVDESRVVSRNLVQIRANDCELKNRVECFFKRKRAEINSCNVIDFKQSNLSSNINSDTEVDVSCARTQSTISKQEQSNCHLKVRRATNRCGPQQMQFRPKYKHELSRLTTSRVSTNEVGESLQNSRLHSIETYMGLTSKNNENIINRIKNVENRILLLESTSPEYQHFFEQSCMDQPEKKIKTNKTYSAHELRVYIHRKNKECP.

Substrate is bound by residues His-101–Arg-102, Lys-117, and Lys-124–Glu-126.

Belongs to the MoaE family. MOCS2B subfamily. Heterotetramer; composed of 2 small (Mocs2A) and 2 large (Mocs2B) subunits.

It is found in the cytoplasm. It carries out the reaction 2 [molybdopterin-synthase sulfur-carrier protein]-C-terminal-Gly-aminoethanethioate + cyclic pyranopterin phosphate + H2O = molybdopterin + 2 [molybdopterin-synthase sulfur-carrier protein]-C-terminal Gly-Gly + 2 H(+). It participates in cofactor biosynthesis; molybdopterin biosynthesis. In terms of biological role, catalytic subunit of the molybdopterin synthase complex, a complex that catalyzes the conversion of precursor Z into molybdopterin. Acts by mediating the incorporation of 2 sulfur atoms from thiocarboxylated Mocs2A into precursor Z to generate a dithiolene group. In Drosophila persimilis (Fruit fly), this protein is Molybdopterin synthase catalytic subunit.